The following is a 234-amino-acid chain: Transcriptional regulatory protein CseB (234 aa).

A Response regulatory domain is found at 6 to 119 (HVLFVEDDDV…VLVARIRAVL (114 aa)). 4-aspartylphosphate is present on D55. The segment at residues 140–234 (GGVLTFGDLE…VRGFGYKLKA (95 aa)) is a DNA-binding region (ompR/PhoB-type).

Post-translationally, phosphorylated by CseC.

The protein localises to the cytoplasm. Its function is as follows. Member of the two-component regulatory system CseB/CseC involved in the stability of the cell envelope. CseB activates transcription of RNA polymerase sigma-E factor, in response to changes in the cell envelope. The polypeptide is Transcriptional regulatory protein CseB (cseB) (Streptomyces coelicolor (strain ATCC BAA-471 / A3(2) / M145)).